We begin with the raw amino-acid sequence, 732 residues long: Aldehyde oxidoreductase molybdenum-binding subunit PaoC (732 aa).

Mo-molybdopterin cytosine dinucleotide is bound by residues 241 to 242, 468 to 470, 511 to 512, 615 to 621, Gln-625, and 688 to 691; these read GF, IGT, GA, RILNPKT, and KGVG. The active-site Proton acceptor is Glu-692.

It belongs to the xanthine dehydrogenase family. As to quaternary structure, heterotrimer composed of PaoA, PaoB and PaoC. Requires Mo-molybdopterin cytosine dinucleotide as cofactor.

The protein localises to the periplasm. The enzyme catalyses an aldehyde + A + H2O = a carboxylate + AH2 + H(+). Oxidizes aldehydes to the corresponding carboxylic acids with a preference for aromatic aldehydes. It might play a role in the detoxification of aldehydes to avoid cell damage. This is Aldehyde oxidoreductase molybdenum-binding subunit PaoC from Escherichia coli O157:H7.